Reading from the N-terminus, the 292-residue chain is D-alanyl-D-alanine endopeptidase (292 aa).

The first 18 residues, 1 to 18, serve as a signal peptide directing secretion; it reads MFKKALFILSLCPSFALA. Catalysis depends on S45, which acts as the Acyl-ester intermediate. K48 acts as the Proton acceptor in catalysis. Residue S102 is part of the active site. A substrate-binding site is contributed by K207.

It belongs to the peptidase S11 family.

It localises to the periplasm. Cell wall formation. May play a specialized role in remodeling the cell wall. Specifically hydrolyzes the DD-diaminopimelate-alanine bonds in high-molecular-mass murein sacculi. The sequence is that of D-alanyl-D-alanine endopeptidase (pbpG) from Haemophilus influenzae (strain ATCC 51907 / DSM 11121 / KW20 / Rd).